A 215-amino-acid polypeptide reads, in one-letter code: UPF0056 membrane protein YhcE (215 aa).

6 helical membrane-spanning segments follow: residues 14–34, 54–74, 81–101, 120–140, 147–167, and 189–209; these read FFIG…FISM, VAII…LFGI, IAGG…KLGE, VVPL…TIVW, ISYL…CWGL, and IMGL…IKGI.

This sequence belongs to the UPF0056 (MarC) family.

Its subcellular location is the cell membrane. The protein is UPF0056 membrane protein YhcE (ychE) of Escherichia coli (strain K12).